The following is a 244-amino-acid chain: Dirigent protein 18 (244 aa).

The signal sequence occupies residues 1–25; the sequence is MMKQSPFSLLTSIFLIAALFTATTA.

This sequence belongs to the plant dirigent protein family. In terms of assembly, homodimer.

The protein resides in the secreted. It localises to the extracellular space. The protein localises to the apoplast. Dirigent proteins impart stereoselectivity on the phenoxy radical-coupling reaction, yielding optically active lignans from two molecules of coniferyl alcohol in the biosynthesis of lignans, flavonolignans, and alkaloids and thus plays a central role in plant secondary metabolism. This Arabidopsis thaliana (Mouse-ear cress) protein is Dirigent protein 18 (DIR18).